A 385-amino-acid polypeptide reads, in one-letter code: Putative nickel insertion protein (385 aa).

Belongs to the LarC family.

This chain is Putative nickel insertion protein, found in Citrifermentans bemidjiense (strain ATCC BAA-1014 / DSM 16622 / JCM 12645 / Bem) (Geobacter bemidjiensis).